The primary structure comprises 282 residues: NAD-dependent protein deacetylase 1 (282 aa).

Positions 1–282 (MTVGRAESPE…ADELSPLPTH (282 aa)) constitute a Deacetylase sirtuin-type domain. NAD(+)-binding positions include 25–45 (GAGI…SPPS) and 101–104 (QNVD). His-119 functions as the Proton acceptor in the catalytic mechanism. The Zn(2+) site is built by Cys-127, Cys-130, Cys-181, and Cys-184. Residues 221–223 (GSS), 247–249 (NRG), and Cys-265 contribute to the NAD(+) site.

Belongs to the sirtuin family. Class II subfamily. Requires Zn(2+) as cofactor.

The protein localises to the cytoplasm. It catalyses the reaction N(6)-acetyl-L-lysyl-[protein] + NAD(+) + H2O = 2''-O-acetyl-ADP-D-ribose + nicotinamide + L-lysyl-[protein]. In terms of biological role, NAD-dependent protein deacetylase which modulates the activities of several enzymes which are inactive in their acetylated form. The chain is NAD-dependent protein deacetylase 1 from Mycobacterium avium (strain 104).